A 132-amino-acid polypeptide reads, in one-letter code: Small ribosomal subunit protein uS8c (132 aa).

The protein belongs to the universal ribosomal protein uS8 family. In terms of assembly, part of the 30S ribosomal subunit.

It is found in the plastid. Its subcellular location is the chloroplast. Functionally, one of the primary rRNA binding proteins, it binds directly to 16S rRNA central domain where it helps coordinate assembly of the platform of the 30S subunit. The sequence is that of Small ribosomal subunit protein uS8c (rps8) from Phaeodactylum tricornutum (strain CCAP 1055/1).